We begin with the raw amino-acid sequence, 292 residues long: Phosphatidylserine decarboxylase proenzyme (292 aa).

Catalysis depends on charge relay system; for autoendoproteolytic cleavage activity residues Asp92, His149, and Ser255. Residue Ser255 is the Schiff-base intermediate with substrate; via pyruvic acid; for decarboxylase activity of the active site. Residue Ser255 is modified to Pyruvic acid (Ser); by autocatalysis.

Belongs to the phosphatidylserine decarboxylase family. PSD-B subfamily. Prokaryotic type I sub-subfamily. Heterodimer of a large membrane-associated beta subunit and a small pyruvoyl-containing alpha subunit. It depends on pyruvate as a cofactor. Is synthesized initially as an inactive proenzyme. Formation of the active enzyme involves a self-maturation process in which the active site pyruvoyl group is generated from an internal serine residue via an autocatalytic post-translational modification. Two non-identical subunits are generated from the proenzyme in this reaction, and the pyruvate is formed at the N-terminus of the alpha chain, which is derived from the carboxyl end of the proenzyme. The autoendoproteolytic cleavage occurs by a canonical serine protease mechanism, in which the side chain hydroxyl group of the serine supplies its oxygen atom to form the C-terminus of the beta chain, while the remainder of the serine residue undergoes an oxidative deamination to produce ammonia and the pyruvoyl prosthetic group on the alpha chain. During this reaction, the Ser that is part of the protease active site of the proenzyme becomes the pyruvoyl prosthetic group, which constitutes an essential element of the active site of the mature decarboxylase.

It localises to the cell membrane. It carries out the reaction a 1,2-diacyl-sn-glycero-3-phospho-L-serine + H(+) = a 1,2-diacyl-sn-glycero-3-phosphoethanolamine + CO2. It participates in phospholipid metabolism; phosphatidylethanolamine biosynthesis; phosphatidylethanolamine from CDP-diacylglycerol: step 2/2. Catalyzes the formation of phosphatidylethanolamine (PtdEtn) from phosphatidylserine (PtdSer). The sequence is that of Phosphatidylserine decarboxylase proenzyme from Idiomarina loihiensis (strain ATCC BAA-735 / DSM 15497 / L2-TR).